The chain runs to 387 residues: Acetylserotonin O-methyltransferase (387 aa).

S-adenosyl-L-methionine is bound by residues Tyr153, Trp170, Glu216, 246–248, and Arg263; that span reads GDF. The active-site Proton donor/acceptor is the His266. Substrate contacts are provided by Asp267 and Gln317. The interval 355 to 387 is disordered; that stretch reads ARGGGAGARSDGGGGEATSQTGSGTGREVGAQD. Positions 356 to 370 are enriched in gly residues; it reads RGGGAGARSDGGGGE.

Belongs to the class I-like SAM-binding methyltransferase superfamily. Cation-independent O-methyltransferase family. Homodimer.

The catalysed reaction is N-acetylserotonin + S-adenosyl-L-methionine = melatonin + S-adenosyl-L-homocysteine + H(+). Its pathway is aromatic compound metabolism; melatonin biosynthesis; melatonin from serotonin: step 1/2. In terms of biological role, catalyzes the transfer of a methyl group onto N-acetylserotonin, producing melatonin (N-acetyl-5-methoxytryptamine). This is Acetylserotonin O-methyltransferase (Asmt) from Mus musculus molossinus (Japanese house mouse).